We begin with the raw amino-acid sequence, 214 residues long: 3-isopropylmalate dehydratase small subunit (214 aa).

This sequence belongs to the LeuD family. LeuD type 1 subfamily. In terms of assembly, heterodimer of LeuC and LeuD.

The catalysed reaction is (2R,3S)-3-isopropylmalate = (2S)-2-isopropylmalate. The protein operates within amino-acid biosynthesis; L-leucine biosynthesis; L-leucine from 3-methyl-2-oxobutanoate: step 2/4. Its function is as follows. Catalyzes the isomerization between 2-isopropylmalate and 3-isopropylmalate, via the formation of 2-isopropylmaleate. The polypeptide is 3-isopropylmalate dehydratase small subunit (Methylobacillus flagellatus (strain ATCC 51484 / DSM 6875 / VKM B-1610 / KT)).